Reading from the N-terminus, the 172-residue chain is 3-hydroxydecanoyl-[acyl-carrier-protein] dehydratase (172 aa).

Histidine 71 is a catalytic residue.

The protein belongs to the thioester dehydratase family. FabA subfamily. As to quaternary structure, homodimer.

The protein resides in the cytoplasm. It catalyses the reaction a (3R)-hydroxyacyl-[ACP] = a (2E)-enoyl-[ACP] + H2O. The catalysed reaction is (3R)-hydroxydecanoyl-[ACP] = (2E)-decenoyl-[ACP] + H2O. It carries out the reaction (2E)-decenoyl-[ACP] = (3Z)-decenoyl-[ACP]. It participates in lipid metabolism; fatty acid biosynthesis. Necessary for the introduction of cis unsaturation into fatty acids. Catalyzes the dehydration of (3R)-3-hydroxydecanoyl-ACP to E-(2)-decenoyl-ACP and then its isomerization to Z-(3)-decenoyl-ACP. Can catalyze the dehydratase reaction for beta-hydroxyacyl-ACPs with saturated chain lengths up to 16:0, being most active on intermediate chain length. This chain is 3-hydroxydecanoyl-[acyl-carrier-protein] dehydratase, found in Brucella anthropi (strain ATCC 49188 / DSM 6882 / CCUG 24695 / JCM 21032 / LMG 3331 / NBRC 15819 / NCTC 12168 / Alc 37) (Ochrobactrum anthropi).